A 452-amino-acid polypeptide reads, in one-letter code: Trigger factor (452 aa).

The region spanning 170–256 (DSIVKVDFVE…IKSIKKRDLP (87 aa)) is the PPIase FKBP-type domain.

The protein belongs to the FKBP-type PPIase family. Tig subfamily.

It is found in the cytoplasm. It carries out the reaction [protein]-peptidylproline (omega=180) = [protein]-peptidylproline (omega=0). Its function is as follows. Involved in protein export. Acts as a chaperone by maintaining the newly synthesized protein in an open conformation. Functions as a peptidyl-prolyl cis-trans isomerase. The protein is Trigger factor of Borreliella afzelii (strain PKo) (Borrelia afzelii).